Reading from the N-terminus, the 226-residue chain is Urease accessory protein UreF (226 aa).

It belongs to the UreF family. In terms of assembly, ureD, UreF and UreG form a complex that acts as a GTP-hydrolysis-dependent molecular chaperone, activating the urease apoprotein by helping to assemble the nickel containing metallocenter of UreC. The UreE protein probably delivers the nickel.

It localises to the cytoplasm. Required for maturation of urease via the functional incorporation of the urease nickel metallocenter. The chain is Urease accessory protein UreF from Burkholderia multivorans (strain ATCC 17616 / 249).